Reading from the N-terminus, the 961-residue chain is Transcription factor MYB3R-4 (961 aa).

The segment at 1–33 is disordered; sequence MEAESSTPQERIPKLRHGRTSGPARRSTRGQWT. HTH myb-type domains follow at residues 24-75, 76-131, and 132-182; these read ARRS…QKVL, NPEL…NPAI, and NKEA…KKKL. DNA-binding regions (H-T-H motif) lie at residues 52 to 75, 104 to 127, and 155 to 178; these read WKKIAEYFKDRTDVQCLHRWQKVL, WSTIARFLPGRIGKQCRERWHNHL, and WAELTKFLPGRSDNGIKNHWHSSV. Disordered regions lie at residues 390-457 and 534-555; these read GHSV…LIIS and RPHSLPKHEPNMTNEQHHEDMG. Polar residues-rich tracts occupy residues 391-405 and 416-430; these read HSVSRSLTQEPNEFN and SSASDRQISEATKSP. Positions 431–444 are enriched in low complexity; the sequence is TQSSSSRFTATAAS. A compositionally biased stretch (basic and acidic residues) spans 534-554; the sequence is RPHSLPKHEPNMTNEQHHEDM. The short motif at 612 to 619 is the Nuclear localization signal element; it reads GKKTLVGA. The disordered stretch occupies residues 756 to 781; that stretch reads NTGKPVLSTPGQSVTKAEKAQVSTPR. A compositionally biased stretch (polar residues) spans 764–781; that stretch reads TPGQSVTKAEKAQVSTPR.

Component of a DREAM-like complex which modulates a variety of developmentally regulated genes and of the mitotic genes in proliferating and differentiated cells. Associates with CDKA-1, RBR1 and E2FB, but not with E2FC, in proliferating cells, at early stages of leaves development. In terms of tissue distribution, expressed in roots, cotyledons and leaves, especially in vascular tissues, and in flowers.

It localises to the nucleus. In terms of biological role, transcription factor that binds 5'-AACGG-3' motifs in gene promoters. Involved in the regulation of cytokinesis, probably via the activation of several G2/M phase-specific genes transcription (e.g. KNOLLE). Required for the maintenance of diploidy. Functionally, involved in transcription regulation during induced endoreduplication at the powdery mildew (e.g. G.orontii) infection site, thus promoting G.orontii growth and reproduction. The chain is Transcription factor MYB3R-4 from Arabidopsis thaliana (Mouse-ear cress).